A 196-amino-acid polypeptide reads, in one-letter code: MPIGVPKVPFRSPGEGDTSWVDIYNRLYRERLFFLGQEVDTEISNQLISLMIYLSIEKDTKDLYLFINSPGGWVISGMAVYDTMQFVRPDVQTICMGLAASIASFILVGGAITKRIAFPHARVMIHQPASSFYEAQTGEFILEAEELLKVRETITRVYVQRTGKPIWVVSEDMERDVFMSATEAQAHGIVDLVAVQ.

Ser101 functions as the Nucleophile in the catalytic mechanism. Residue His126 is part of the active site.

Belongs to the peptidase S14 family. In terms of assembly, component of the chloroplastic Clp protease core complex.

Its subcellular location is the plastid. The protein localises to the chloroplast stroma. The enzyme catalyses Hydrolysis of proteins to small peptides in the presence of ATP and magnesium. alpha-casein is the usual test substrate. In the absence of ATP, only oligopeptides shorter than five residues are hydrolyzed (such as succinyl-Leu-Tyr-|-NHMec, and Leu-Tyr-Leu-|-Tyr-Trp, in which cleavage of the -Tyr-|-Leu- and -Tyr-|-Trp bonds also occurs).. Cleaves peptides in various proteins in a process that requires ATP hydrolysis. Has a chymotrypsin-like activity. Plays a major role in the degradation of misfolded proteins. This Nasturtium officinale (Watercress) protein is ATP-dependent Clp protease proteolytic subunit.